A 173-amino-acid chain; its full sequence is Large ribosomal subunit protein uL10 (173 aa).

It belongs to the universal ribosomal protein uL10 family. Part of the ribosomal stalk of the 50S ribosomal subunit. The N-terminus interacts with L11 and the large rRNA to form the base of the stalk. The C-terminus forms an elongated spine to which L12 dimers bind in a sequential fashion forming a multimeric L10(L12)X complex.

Forms part of the ribosomal stalk, playing a central role in the interaction of the ribosome with GTP-bound translation factors. The chain is Large ribosomal subunit protein uL10 from Chlorobaculum tepidum (strain ATCC 49652 / DSM 12025 / NBRC 103806 / TLS) (Chlorobium tepidum).